We begin with the raw amino-acid sequence, 200 residues long: 6,7-dimethyl-8-ribityllumazine synthase (200 aa).

5-amino-6-(D-ribitylamino)uracil is bound by residues W25, 59 to 61, and 119 to 121; these read SWE and VLI. 124–125 provides a ligand contact to (2S)-2-hydroxy-3-oxobutyl phosphate; sequence ET. The active-site Proton donor is the H127. F152 lines the 5-amino-6-(D-ribitylamino)uracil pocket. A (2S)-2-hydroxy-3-oxobutyl phosphate-binding site is contributed by R166.

This sequence belongs to the DMRL synthase family. As to quaternary structure, homopentamer.

The catalysed reaction is (2S)-2-hydroxy-3-oxobutyl phosphate + 5-amino-6-(D-ribitylamino)uracil = 6,7-dimethyl-8-(1-D-ribityl)lumazine + phosphate + 2 H2O + H(+). Its pathway is cofactor biosynthesis; riboflavin biosynthesis; riboflavin from 2-hydroxy-3-oxobutyl phosphate and 5-amino-6-(D-ribitylamino)uracil: step 1/2. In terms of biological role, catalyzes the formation of 6,7-dimethyl-8-ribityllumazine by condensation of 5-amino-6-(D-ribitylamino)uracil with 3,4-dihydroxy-2-butanone 4-phosphate. This is the penultimate step in the biosynthesis of riboflavin. This Pyricularia oryzae (strain 70-15 / ATCC MYA-4617 / FGSC 8958) (Rice blast fungus) protein is 6,7-dimethyl-8-ribityllumazine synthase.